We begin with the raw amino-acid sequence, 186 residues long: Acireductone dioxygenase (186 aa).

H89, H91, E95, and H134 together coordinate Fe(2+). Residues H89, H91, E95, and H134 each coordinate Ni(2+).

It belongs to the acireductone dioxygenase (ARD) family. Requires Fe(2+) as cofactor. The cofactor is Ni(2+).

The protein resides in the cytoplasm. The protein localises to the nucleus. It catalyses the reaction 1,2-dihydroxy-5-(methylsulfanyl)pent-1-en-3-one + O2 = 4-methylsulfanyl-2-oxobutanoate + formate + 2 H(+). It carries out the reaction 1,2-dihydroxy-5-(methylsulfanyl)pent-1-en-3-one + O2 = 3-(methylsulfanyl)propanoate + CO + formate + 2 H(+). It participates in amino-acid biosynthesis; L-methionine biosynthesis via salvage pathway; L-methionine from S-methyl-5-thio-alpha-D-ribose 1-phosphate: step 5/6. Its function is as follows. Catalyzes 2 different reactions between oxygen and the acireductone 1,2-dihydroxy-3-keto-5-methylthiopentene (DHK-MTPene) depending upon the metal bound in the active site. Fe-containing acireductone dioxygenase (Fe-ARD) produces formate and 2-keto-4-methylthiobutyrate (KMTB), the alpha-ketoacid precursor of methionine in the methionine recycle pathway. Ni-containing acireductone dioxygenase (Ni-ARD) produces methylthiopropionate, carbon monoxide and formate, and does not lie on the methionine recycle pathway. The polypeptide is Acireductone dioxygenase (Drosophila melanogaster (Fruit fly)).